We begin with the raw amino-acid sequence, 486 residues long: Aspartyl/glutamyl-tRNA(Asn/Gln) amidotransferase subunit B (486 aa).

This sequence belongs to the GatB/GatE family. GatB subfamily. As to quaternary structure, heterotrimer of A, B and C subunits.

It catalyses the reaction L-glutamyl-tRNA(Gln) + L-glutamine + ATP + H2O = L-glutaminyl-tRNA(Gln) + L-glutamate + ADP + phosphate + H(+). The enzyme catalyses L-aspartyl-tRNA(Asn) + L-glutamine + ATP + H2O = L-asparaginyl-tRNA(Asn) + L-glutamate + ADP + phosphate + 2 H(+). Functionally, allows the formation of correctly charged Asn-tRNA(Asn) or Gln-tRNA(Gln) through the transamidation of misacylated Asp-tRNA(Asn) or Glu-tRNA(Gln) in organisms which lack either or both of asparaginyl-tRNA or glutaminyl-tRNA synthetases. The reaction takes place in the presence of glutamine and ATP through an activated phospho-Asp-tRNA(Asn) or phospho-Glu-tRNA(Gln). This chain is Aspartyl/glutamyl-tRNA(Asn/Gln) amidotransferase subunit B, found in Leptospira interrogans serogroup Icterohaemorrhagiae serovar Lai (strain 56601).